Reading from the N-terminus, the 654-residue chain is DNA-directed RNA polymerase III subunit RPC3 (654 aa).

Thr-27 is modified (phosphothreonine). 2 disordered regions span residues 381-401 (LSRK…ASLP) and 422-448 (KSLQ…EDPH). Residues Ser-392 and Ser-394 each carry the phosphoserine modification. A compositionally biased stretch (acidic residues) spans 429-444 (DTQEEDEEEEDLDADT). A leucine-zipper region spans residues 581-602 (LEWNMANLLFKKEKLKQENSTL).

Belongs to the RNA polymerase beta chain family. As to quaternary structure, component of the RNA polymerase III (Pol III) complex consisting of 17 subunits.

It is found in the cytoplasm. The protein localises to the nucleus. DNA-dependent RNA polymerase catalyzes the transcription of DNA into RNA using the four ribonucleoside triphosphates as substrates. Specific core component of RNA polymerase III which synthesizes small RNAs, such as 5S rRNA and tRNAs. This Saccharomyces cerevisiae (strain YJM789) (Baker's yeast) protein is DNA-directed RNA polymerase III subunit RPC3 (RPC82).